A 119-amino-acid polypeptide reads, in one-letter code: MPLVVAVIFFSLWVFALGQLEQPEISISRPANKSAHISWKASIQGFSSKIIHWYWQKPNKGLEYLLHVFLTISAQDCSGGKTKKLEVSKNAHTSTSTLKIKFLEKEDEVVYHCACWIRH.

An N-terminal signal peptide occupies residues 1–18 (MPLVVAVIFFSLWVFALG). The Ig-like domain occupies 23–119 (PEISISRPAN…VYHCACWIRH (97 aa)). Residue Asn-32 is glycosylated (N-linked (GlcNAc...) asparagine).

As to quaternary structure, most probably, the gamma-delta TR is not assembled due to incorrect folding of the gamma chain. Gamma-delta TR is a heterodimer composed of a gamma and delta chain; disulfide-linked. The gamma-delta TR is associated with the transmembrane signaling CD3 coreceptor proteins following the stoichiometry: a single gamma-delta TR heterodimer associates with one CD3D-CD3E heterodimer, one CD3G-CD3E heterodimer and one CD247 homodimer forming a stable octameric structure. Upon activation, gamma-delta TR complex associates with FCER1G to initiate intracellular signaling.

The protein localises to the cell membrane. Functionally, probable non-functional open reading frame (ORF) of V region of the variable domain of T cell receptor (TR) gamma chain. Non-functional ORF generally cannot participate in the synthesis of a productive T cell receptor (TR) chain due to altered V-(D)-J or switch recombination and/or splicing site (at mRNA level) and/or conserved amino acid change (protein level). Gamma-delta TRs recognize a variety of self and foreign non-peptide antigens frequently expressed at the epithelial boundaries between the host and external environment, including endogenous lipids presented by MH-like protein CD1D and phosphoantigens presented by butyrophilin-like molecule BTN3A1. Upon antigen recognition induces rapid, innate-like immune responses involved in pathogen clearance and tissue repair. Binding of gamma-delta TR complex to antigen triggers phosphorylation of immunoreceptor tyrosine-based activation motifs (ITAMs) in the CD3 chains by the LCK and FYN kinases, allowing the recruitment, phosphorylation, and activation of ZAP70 that facilitates phosphorylation of the scaffolding proteins LCP2 and LAT. This lead to the formation of a supramolecular signalosome that recruits the phospholipase PLCG1, resulting in calcium mobilization and ERK activation, ultimately leading to T cell expansion and differentiation into effector cells. Gamma-delta TRs are produced through somatic rearrangement of a limited repertoire of variable (V), diversity (D), and joining (J) genes. The potential diversity of gamma-delta TRs is conferred by the unique ability to rearrange (D) genes in tandem and to utilize all three reading frames. The combinatorial diversity is considerably increased by the sequence exonuclease trimming and random nucleotide (N) region additions which occur during the V-(D)-J rearrangements. This chain is Probable non-functional T cell receptor gamma variable 11, found in Homo sapiens (Human).